Consider the following 158-residue polypeptide: MLP-like protein 43 (158 aa).

N-acetylalanine is present on alanine 2.

The protein belongs to the MLP family.

This Arabidopsis thaliana (Mouse-ear cress) protein is MLP-like protein 43 (MLP43).